We begin with the raw amino-acid sequence, 144 residues long: Acidic phospholipase A2 (144 aa).

A signal peptide spans 1–19 (MYPAHLLVLLAVCVSLLGA). Residues 20–27 (SDIPPLPL) constitute a propeptide that is removed on maturation. Intrachain disulfides connect Cys-38–Cys-98, Cys-54–Cys-143, Cys-56–Cys-72, Cys-71–Cys-125, Cys-78–Cys-118, Cys-87–Cys-111, and Cys-105–Cys-116. Residues Tyr-55, Gly-57, and Gly-59 each contribute to the Ca(2+) site. His-75 is a catalytic residue. Asp-76 contacts Ca(2+). Asp-119 is a catalytic residue.

It belongs to the phospholipase A2 family. Group I subfamily. D49 sub-subfamily. The cofactor is Ca(2+). As to expression, expressed by the venom gland.

Its subcellular location is the secreted. The catalysed reaction is a 1,2-diacyl-sn-glycero-3-phosphocholine + H2O = a 1-acyl-sn-glycero-3-phosphocholine + a fatty acid + H(+). Functionally, PLA2 catalyzes the calcium-dependent hydrolysis of the 2-acyl groups in 3-sn-phosphoglycerides. In Aipysurus laevis (Olive sea snake), this protein is Acidic phospholipase A2.